The chain runs to 143 residues: Gastrin-releasing peptide (143 aa).

The N-terminal stretch at 1-23 (MRGPELRLVLLALVLCQAPLGPA) is a signal peptide. Met50 is modified (methionine amide). The propeptide occupies 54 to 143 (STGESRHVLE…GLKAKEGALS (90 aa)). The interval 91 to 115 (KGNSSHRSPQLKPLSTHQPTLDTED) is disordered. The span at 92–111 (GNSSHRSPQLKPLSTHQPTL) shows a compositional bias: polar residues.

Belongs to the bombesin/neuromedin-B/ranatensin family.

The protein resides in the secreted. It is found in the cytoplasmic vesicle. It localises to the secretory vesicle lumen. The protein localises to the cell projection. Its subcellular location is the neuron projection. Its function is as follows. Stimulates the release of gastrin and other gastrointestinal hormones. Contributes to the perception of prurient stimuli and to the transmission of itch signals in the spinal cord that promote scratching behavior. Contributes primarily to nonhistaminergic itch sensation. In one study, shown to act in the amygdala as part of an inhibitory network which inhibits memory specifically related to learned fear. In another study, shown to act on vasoactive intestinal peptide (VIP)-expressing cells in the auditory cortex, most likely via extrasynaptic diffusion from local and long-range sources, to mediate disinhibition of glutamatergic cells via VIP cell-specific GRPR signaling which leads to enhanced auditory fear memories. Contributes to the regulation of food intake. Inhibits voltage-gated sodium channels but enhances voltage-gated potassium channels in hippocampal neurons. Induces sighing by acting directly on the pre-Botzinger complex, a cluster of several thousand neurons in the ventrolateral medulla responsible for inspiration during respiratory activity. Functionally, induces an itch response through activation of receptors present on mast cells, triggering mast cell degranulation. In Cavia porcellus (Guinea pig), this protein is Gastrin-releasing peptide (GRP).